We begin with the raw amino-acid sequence, 306 residues long: Probable C-terminal domain small phosphatase (306 aa).

Residues 1-36 (MNSSPITQVSNPNDSLNHSSTNLIPSSHNSLNNYPQ) show a composition bias toward polar residues. Disordered regions lie at residues 1-45 (MNSS…NRKK) and 61-116 (NDQN…NKDS). A compositionally biased stretch (low complexity) spans 61-111 (NDQNNGNNINTDNGASNNDKLQQQKQYNQQQQQQYNQHQQQQQQQQQQQQY). The 159-residue stretch at 132-290 (RHVGLKTLVL…LDLLPLLDDL (159 aa)) folds into the FCP1 homology domain. The active-site 4-aspartylphosphate intermediate is D142. D142, D144, and N253 together coordinate Mg(2+). D144 acts as the Proton donor in catalysis.

Monomer. Mg(2+) serves as cofactor.

Its subcellular location is the nucleus. It carries out the reaction O-phospho-L-seryl-[protein] + H2O = L-seryl-[protein] + phosphate. The enzyme catalyses O-phospho-L-threonyl-[protein] + H2O = L-threonyl-[protein] + phosphate. In terms of biological role, may function as a phosphatase involved in the regulation of cell growth and differentiation. The sequence is that of Probable C-terminal domain small phosphatase (fcpA) from Dictyostelium discoideum (Social amoeba).